We begin with the raw amino-acid sequence, 203 residues long: FMN-dependent NADH:quinone oxidoreductase (203 aa).

FMN-binding positions include serine 9, serine 15–serine 17, and serine 138–glycine 141.

This sequence belongs to the azoreductase type 1 family. As to quaternary structure, homodimer. It depends on FMN as a cofactor.

It catalyses the reaction 2 a quinone + NADH + H(+) = 2 a 1,4-benzosemiquinone + NAD(+). The catalysed reaction is N,N-dimethyl-1,4-phenylenediamine + anthranilate + 2 NAD(+) = 2-(4-dimethylaminophenyl)diazenylbenzoate + 2 NADH + 2 H(+). Functionally, quinone reductase that provides resistance to thiol-specific stress caused by electrophilic quinones. Also exhibits azoreductase activity. Catalyzes the reductive cleavage of the azo bond in aromatic azo compounds to the corresponding amines. The polypeptide is FMN-dependent NADH:quinone oxidoreductase (Methylorubrum extorquens (strain PA1) (Methylobacterium extorquens)).